We begin with the raw amino-acid sequence, 356 residues long: Tyrosine recombinase XerS (356 aa).

The Core-binding (CB) domain occupies 16–121 (LMPWYVLEYY…ALSSLYKYLT (106 aa)). The 186-residue stretch at 169–354 (GFLTYIDQEH…VSDEQKNALD (186 aa)) folds into the Tyr recombinase domain. Active-site residues include Arg-210, Lys-234, His-306, Arg-309, and His-332. Residue Tyr-341 is the O-(3'-phospho-DNA)-tyrosine intermediate of the active site.

Belongs to the 'phage' integrase family. XerS subfamily.

Its subcellular location is the cytoplasm. With respect to regulation, ftsK is required for recombination. In terms of biological role, site-specific tyrosine recombinase, which acts by catalyzing the cutting and rejoining of the recombining DNA molecules. Essential to convert dimers of the bacterial chromosome into monomers to permit their segregation at cell division. In Streptococcus pneumoniae (strain 70585), this protein is Tyrosine recombinase XerS.